A 327-amino-acid chain; its full sequence is tRNA uridine(34) hydroxylase (327 aa).

The region spanning 130 to 224 is the Rhodanese domain; it reads LDEDTVVLDT…YGKDPEVQGE (95 aa). The active-site Cysteine persulfide intermediate is Cys184.

Belongs to the TrhO family.

It catalyses the reaction uridine(34) in tRNA + AH2 + O2 = 5-hydroxyuridine(34) in tRNA + A + H2O. Catalyzes oxygen-dependent 5-hydroxyuridine (ho5U) modification at position 34 in tRNAs. This is tRNA uridine(34) hydroxylase from Streptococcus thermophilus (strain CNRZ 1066).